Here is a 481-residue protein sequence, read N- to C-terminus: Guanine nucleotide exchange factor C9orf72 homolog (481 aa).

The 172-residue stretch at 23 to 194 (SPLLAATFAY…ELLASMKSHS (172 aa)) folds into the uDENN C9ORF72-type domain. The region spanning 200-343 (DIADTVLNDD…SELTAFWRAT (144 aa)) is the cDENN C9ORF72-type domain. The region spanning 370-464 (VLHRDTLVKA…IKPGLHSFIF (95 aa)) is the dDENN C9ORF72-type domain. The segment at 461–481 (SFIFGRPFYTSVQERDVLMTF) is required for the homodimerization of the C9orf72-SMCR8 complex.

As to quaternary structure, component of the C9orf72-SMCR8 complex, at least composed of C9orf72, SMCR8 and WDR41. The complex is formed of two protomers, each individually consisting of one molecule each of C9orf72, SMCR8 and WDR41. The protomers homodimerize via an interaction between C9orf72 (via C-terminus) and SMCR8 (via N-terminus). Within each protomer SMCR8 (via DENN domain) acts as a bridging protein between WDR41 (via C-terminus and N-terminus) and C9orf72 (via C-terminus). The C9orf72-SMCR8 complex associates with the ULK1/ATG1 kinase complex. Interacts with ULK1/ATG1 kinase complex members ULK1, ATG13 and RB1CC1. Interacts with SMCR8; the interaction is direct. Interacts with HNRNPA1, HNRNPA2B1 and UBQLN2. Interacts with small Rab GTPase RAB1A; the interaction mediates recruitment of RAB1A to the ULK1/ATG1 kinase complex. Also interacts with small Rab GTPase RAB7A. Interacts with cofilin. Interacts with GTP-binding proteins ARF1 and ARF6. Interacts with the DLG4/PSD-95. Interacts with CARM1 (via PH domain-like fold). Interacts with RAB39A and RAB39B (in GDP-bound forms); functions as GEF for RAB39A and RAB39B. Expressed in postnatal cerebellum and cortex (at protein level). Neuronal expression is detected in several regions of the adult brain and spinal cord. Prominent expression also observed in embryonic and early postnatal neurons including retinal ganglion cells, sensory neurons in the olfactory epithelium and in dorsal root ganglia, and spinal motor neurons. Expressed in the developing cerebral cortex, cerebellum, olfactory bulb, hippocampus and spinal cord in the embryo and in P0 cortical neurons and astrocytes. Also expressed in non-neuronal tissues such as kidney and tooth. In the spleen, highly expressed in myeloid cells compared to B cell and T cell populations where expression is much lower. In the brain, highly expressed in microglia. In terms of tissue distribution, expressed in the forebrain, including in the glomerular layer of the olfactory bulb (at protein level).

Its subcellular location is the nucleus. The protein localises to the cytoplasm. It is found in the P-body. The protein resides in the stress granule. It localises to the endosome. Its subcellular location is the lysosome. The protein localises to the cytoplasmic vesicle. It is found in the autophagosome. The protein resides in the autolysosome. It localises to the secreted. Its subcellular location is the cell projection. The protein localises to the axon. It is found in the growth cone. The protein resides in the perikaryon. It localises to the dendrite. Its subcellular location is the presynapse. The protein localises to the postsynapse. Its function is as follows. Acts as a guanine-nucleotide releasing factor (GEF) for Rab GTPases by promoting the conversion of inactive RAB-GDP to the active form RAB-GTP. Acts as a GEF for RAB39A which enables HOPS-mediated autophagosome-lysosome membrane tethering and fusion in mammalian autophagy. Component of the C9orf72-SMCR8 complex where both subunits display GEF activity and that regulates autophagy. As part of the C9orf72-SMCR8-WDR41 (CSW) complex, functions as GEF for RAB8A, and RAB39B, thereby promoting autophagosome maturation. As part of the C9orf72-SMCR8 complex, also functions as GTPase activating protein (GAP) for RAB8A and RAB11A in vitro. The C9orf72-SMCR8 complex also acts as a regulator of autophagy initiation by interacting with the ULK1/ATG1 kinase complex and modulating its protein kinase activity. Promotes initiation of autophagy by regulating the RAB1A-dependent trafficking of the ULK1/ATG1 kinase complex to the phagophore which leads to autophagosome formation. Acts as a regulator of mTORC1 signaling by promoting phosphorylation of mTORC1 substrates. Plays a role in endosomal trafficking. May be involved in regulating the maturation of phagosomes to lysosomes. Promotes the lysosomal localization and lysosome-mediated degradation of CARM1 which leads to inhibition of starvation-induced lipid metabolism. Regulates actin dynamics in motor neurons by inhibiting the GTP-binding activity of ARF6, leading to ARF6 inactivation. This reduces the activity of the LIMK1 and LIMK2 kinases which are responsible for phosphorylation and inactivation of CFL1/cofilin, leading to cofilin activation. Positively regulates axon extension and axon growth cone size in spinal motor neurons. Required for SMCR8 protein expression and localization at pre- and post-synaptic compartments in the forebrain, also regulates protein abundance of RAB3A and GRIA1/GLUR1 in post-synaptic compartments in the forebrain and hippocampus. Plays a role within the hematopoietic system in restricting inflammation and the development of autoimmunity. In Mus musculus (Mouse), this protein is Guanine nucleotide exchange factor C9orf72 homolog.